Consider the following 563-residue polypeptide: Bifunctional dihydrofolate reductase-thymidylate synthase (563 aa).

Residues 3 to 195 (KFNIIAAINN…ILLRFQEYSV (193 aa)) enclose the DHFR domain. Position 117–124 (117–124 (GGGVIYDL)) interacts with NADP(+). Residues 275–563 (YIELVKTIME…CPSISAEMIA (289 aa)) form a thymidylate synthase region. Arginine 292 serves as a coordination point for dUMP. The active site involves cysteine 435. DUMP is bound by residues histidine 436, 464–468 (QRSWD), asparagine 474, and 504–506 (HIY).

It in the N-terminal section; belongs to the dihydrofolate reductase family. In the C-terminal section; belongs to the thymidylate synthase family.

It catalyses the reaction (6S)-5,6,7,8-tetrahydrofolate + NADP(+) = 7,8-dihydrofolate + NADPH + H(+). It carries out the reaction dUMP + (6R)-5,10-methylene-5,6,7,8-tetrahydrofolate = 7,8-dihydrofolate + dTMP. The protein operates within cofactor biosynthesis; tetrahydrofolate biosynthesis; 5,6,7,8-tetrahydrofolate from 7,8-dihydrofolate: step 1/1. Bifunctional enzyme. Involved in de novo dTMP biosynthesis. Key enzyme in folate metabolism. Catalyzes an essential reaction for de novo glycine and purine synthesis, DNA precursor synthesis, and for the conversion of dUMP to dTMP. The sequence is that of Bifunctional dihydrofolate reductase-thymidylate synthase from Acanthamoeba polyphaga mimivirus (APMV).